The following is a 246-amino-acid chain: TVP38/TMEM64 family membrane protein MT0653 (246 aa).

The next 5 helical transmembrane spans lie at 19–39 (LVVFAGFLVGMFYLVAATDVI), 57–77 (LTYVVVSAVLGALFVPGPILA), 83–103 (LFGPLVGVFVTLGATVGTAVV), 157–177 (AFGTFGVPLWQMAVGAFIGSA), and 196–216 (LLASCAIAVWCVTAIIGAFAA).

The protein belongs to the TVP38/TMEM64 family.

The protein resides in the cell membrane. The polypeptide is TVP38/TMEM64 family membrane protein MT0653 (Mycobacterium tuberculosis (strain CDC 1551 / Oshkosh)).